The sequence spans 142 residues: Large ribosomal subunit protein uL13 (142 aa).

It belongs to the universal ribosomal protein uL13 family. In terms of assembly, part of the 50S ribosomal subunit.

Its function is as follows. This protein is one of the early assembly proteins of the 50S ribosomal subunit, although it is not seen to bind rRNA by itself. It is important during the early stages of 50S assembly. This is Large ribosomal subunit protein uL13 from Actinobacillus succinogenes (strain ATCC 55618 / DSM 22257 / CCUG 43843 / 130Z).